A 169-amino-acid polypeptide reads, in one-letter code: Superoxide dismutase [Cu-Zn] 1 (169 aa).

The first 18 residues, 1 to 18 (MFEQWDALCAVLFSFSIA), serve as a signal peptide directing secretion. Positions 65, 67, and 83 each coordinate Cu cation. C72 and C165 are oxidised to a cystine. Zn(2+)-binding residues include H83, H91, H100, and D103. H145 lines the Cu cation pocket.

This sequence belongs to the Cu-Zn superoxide dismutase family. Cu cation is required as a cofactor. Requires Zn(2+) as cofactor.

The catalysed reaction is 2 superoxide + 2 H(+) = H2O2 + O2. Functionally, destroys radicals which are normally produced within the cells and which are toxic to biological systems. This is Superoxide dismutase [Cu-Zn] 1 (sodC1) from Aquifex aeolicus (strain VF5).